The following is a 1408-amino-acid chain: ABC transporter B family member 20 (1408 aa).

The disordered stretch occupies residues 14–49 (HMQPLTPVSEVSEPPESPSPYLDPGAESGGGTGTAA). Residues 20–39 (PVSEVSEPPESPSPYLDPGA) show a composition bias toward low complexity. Residues 86-106 (VLMIVGSVAAAAHGTALIVYL) form a helical membrane-spanning segment. An ABC transmembrane type-1 1 domain is found at 88 to 381 (MIVGSVAAAA…AATNFYSFDQ (294 aa)). A glycan (N-linked (GlcNAc...) asparagine) is linked at Asn-120. A run of 3 helical transmembrane segments spans residues 141 to 161 (IVYI…CWIL), 214 to 233 (VGNY…IGFV), and 238 to 260 (IALI…NIFL). N-linked (GlcNAc...) asparagine glycosylation occurs at Asn-293. 2 helical membrane-spanning segments follow: residues 312 to 332 (GILI…LAIC) and 353 to 373 (GEII…NQAA). Residues 414–649 (IEFRNVYFSY…GGLYAELLKC (236 aa)) form the ABC transporter 1 domain. 449-456 (GRNGSGKS) contacts ATP. Residue Asn-451 is glycosylated (N-linked (GlcNAc...) asparagine). Disordered stretches follow at residues 676–735 (SSAG…SLDC) and 752–816 (LPHL…DAQH). The span at 762 to 771 (CPQQKSNGSE) shows a compositional bias: polar residues. N-linked (GlcNAc...) asparagine glycosylation is present at Asn-768. The span at 802–816 (DDTKANGKASKDAQH) shows a compositional bias: basic and acidic residues. An ABC transmembrane type-1 2 domain is found at 836-1124 (AVLGSLGAAI…PFGLAPYILK (289 aa)). 6 consecutive transmembrane segments (helical) span residues 841-861 (LGAA…ALVV), 881-901 (LIIA…HFYF), 959-979 (IFIQ…LLGW), 983-1003 (LVAL…KLWL), 1062-1082 (IGFA…LLLW), and 1103-1123 (MVFS…PYIL). The 238-residue stretch at 1159-1396 (IELKNVDFCY…NGLYVRLMQP (238 aa)) folds into the ABC transporter 2 domain. Asn-1179 is a glycosylation site (N-linked (GlcNAc...) asparagine). 1194–1201 (GVSGSGKS) is an ATP binding site. Residues Asn-1261 and Asn-1347 are each glycosylated (N-linked (GlcNAc...) asparagine).

It belongs to the ABC transporter superfamily. ABCB family. Multidrug resistance exporter (TC 3.A.1.201) subfamily. In terms of tissue distribution, expressed in aerial tissues.

It localises to the membrane. It catalyses the reaction (indol-3-yl)acetate(in) + ATP + H2O = (indol-3-yl)acetate(out) + ADP + phosphate + H(+). Probable auxin efflux transporter that contributes, together with ABCB6 and in a FKBP42/TWD1-dependent manner, to the regulation of leaf position and morphology, internode distribution, roots development, and inflorescence organization, probably by modulating auxin repartition. In Arabidopsis thaliana (Mouse-ear cress), this protein is ABC transporter B family member 20.